A 250-amino-acid chain; its full sequence is Small ribosomal subunit protein uS2 (250 aa).

The protein belongs to the universal ribosomal protein uS2 family.

The sequence is that of Small ribosomal subunit protein uS2 from Acidovorax ebreus (strain TPSY) (Diaphorobacter sp. (strain TPSY)).